The primary structure comprises 93 residues: Large ribosomal subunit protein bL31 (93 aa).

A disordered region spans residues 72 to 93 (VKTVSSNADNQKETTEELIKNK). Residues 81 to 93 (NQKETTEELIKNK) show a composition bias toward basic and acidic residues.

It belongs to the bacterial ribosomal protein bL31 family. Type A subfamily. In terms of assembly, part of the 50S ribosomal subunit.

Its function is as follows. Binds the 23S rRNA. The chain is Large ribosomal subunit protein bL31 from Onion yellows phytoplasma (strain OY-M).